Consider the following 358-residue polypeptide: Histidinol-phosphate aminotransferase (358 aa).

The residue at position 210 (K210) is an N6-(pyridoxal phosphate)lysine.

It belongs to the class-II pyridoxal-phosphate-dependent aminotransferase family. Histidinol-phosphate aminotransferase subfamily. In terms of assembly, homodimer. The cofactor is pyridoxal 5'-phosphate.

It carries out the reaction L-histidinol phosphate + 2-oxoglutarate = 3-(imidazol-4-yl)-2-oxopropyl phosphate + L-glutamate. Its pathway is amino-acid biosynthesis; L-histidine biosynthesis; L-histidine from 5-phospho-alpha-D-ribose 1-diphosphate: step 7/9. This is Histidinol-phosphate aminotransferase from Clostridium beijerinckii (strain ATCC 51743 / NCIMB 8052) (Clostridium acetobutylicum).